A 573-amino-acid polypeptide reads, in one-letter code: MTKEIQGIAASSGIAIAKAFRLENPELTVEKKSVTEVEAEVARLEAALEKSKSELEIIREHARKELGDDKAEIFEAHLLVLSDPELINPIKDKITNENVNAEHALDEVAAMFINMFESMDNEYMKERAADIRDVTKRVLAHLLGVNVSNPSLISEEVVIIAEDLTPSDTAQLNRKFVKGFTTDIGGRTSHSAIMARSMEIPAVVGTKTVMEDIQNGVLVIVDGLDGEVIVDPSEETVKAYEKKAAEYAEQKAEWAKLVNEKTVSADDHHVELAANIGTPEDVKGVLENGGEGVGLYRTEFLYMGREDLPTEEEQFTSYKTVLERMEGKPVVVRTLDIGGDKELPYLNLPKEMNPFLGFRAIRLCLEMQDMFRTQLRALLRASVYGNLKIMFPMIATVDEFRQAKAILLEEKAKLQQEGVQVSEDIEVGMMVEIPSSAVIADLFAKEVDFFSIGTNDLIQYTLAADRMNERVSYLYQPYNPAILRLVNMVIKAAHKEGKWVGMCGEMAGDEIAIPILLGLGLDEFSMSATSILKARSQIRQLSKADIEPHLDTILSMSSTEEVIEFVKSTFHIG.

The active-site Tele-phosphohistidine intermediate is H190. 2 residues coordinate phosphoenolpyruvate: R297 and R333. Residues E432 and D456 each coordinate Mg(2+). Residues N455–D456 and R466 each bind phosphoenolpyruvate. The Proton donor role is filled by C503.

This sequence belongs to the PEP-utilizing enzyme family. Homodimer. Mg(2+) is required as a cofactor.

It is found in the cytoplasm. The catalysed reaction is L-histidyl-[protein] + phosphoenolpyruvate = N(pros)-phospho-L-histidyl-[protein] + pyruvate. Functionally, general (non sugar-specific) component of the phosphoenolpyruvate-dependent sugar phosphotransferase system (sugar PTS). This major carbohydrate active-transport system catalyzes the phosphorylation of incoming sugar substrates concomitantly with their translocation across the cell membrane. Enzyme I transfers the phosphoryl group from phosphoenolpyruvate (PEP) to the phosphoryl carrier protein (HPr). The sequence is that of Phosphoenolpyruvate-protein phosphotransferase (ptsI) from Priestia megaterium (Bacillus megaterium).